The primary structure comprises 575 residues: Transcription factor collier (575 aa).

Residues 79–82 (RKSN) form an interaction with DNA region. A C5-type zinc finger spans residues 167–186 (CRVLLTHEVMCSRCCDKKSC). Interaction with DNA regions lie at residues 213 to 220 (NCLKNAGN) and 252 to 255 (NNSK). The tract at residues 255 to 278 (KHGRRAKRLDTTEGTGNTSLSISG) is disordered. Residues 266–276 (TEGTGNTSLSI) are compositionally biased toward polar residues. An IPT/TIG domain is found at 299–382 (PCIKAISPSE…KGSPGRFVYV (84 aa)). Disordered regions lie at residues 456–492 (GQWT…GSYG) and 546–575 (AATA…AAAV). Over residues 479–492 (SSASTPHSSGGSYG) the composition is skewed to low complexity. Over residues 546 to 557 (AATAHPHHHYPH) the composition is skewed to basic residues. Over residues 561-575 (PWHNPAVSAATAAAV) the composition is skewed to low complexity.

Belongs to the COE family. In terms of tissue distribution, its expression at the blastoderm stage is restricted to a single stripe of cells corresponding to part of the intercalary and mandibular segment primordia, possibly parasegment O.

It localises to the nucleus. May act as a 'second-level regulator' of head patterning. Required for establishment of the PS(-1)/PS0 parasegmental border and formation of the intercalary segment. Required for expression of the segment polarity genes hedgehog, engrailed and wingless, and the segment-identity genes CAP and collar in the intercalary segment. Required at the onset of the gastrulation for the correct formation of the mandibular segment. This chain is Transcription factor collier (kn), found in Drosophila melanogaster (Fruit fly).